Consider the following 275-residue polypeptide: NADPH-dependent 7-cyano-7-deazaguanine reductase (275 aa).

81–83 (IES) is a binding site for substrate. 83-84 (SK) is a binding site for NADPH. Cys-181 acts as the Thioimide intermediate in catalysis. Asp-188 acts as the Proton donor in catalysis. A substrate-binding site is contributed by 220–221 (HE). Residue 249-250 (RG) participates in NADPH binding.

Belongs to the GTP cyclohydrolase I family. QueF type 2 subfamily. Homodimer.

It is found in the cytoplasm. The enzyme catalyses 7-aminomethyl-7-carbaguanine + 2 NADP(+) = 7-cyano-7-deazaguanine + 2 NADPH + 3 H(+). It participates in tRNA modification; tRNA-queuosine biosynthesis. Catalyzes the NADPH-dependent reduction of 7-cyano-7-deazaguanine (preQ0) to 7-aminomethyl-7-deazaguanine (preQ1). The protein is NADPH-dependent 7-cyano-7-deazaguanine reductase of Xylella fastidiosa (strain 9a5c).